A 66-amino-acid polypeptide reads, in one-letter code: Large ribosomal subunit protein bL35 (66 aa).

Basic residues-rich tracts occupy residues 1–15 (MPKL…KRFK) and 24–40 (HAQR…TKKQ). Residues 1–40 (MPKLKTKSGAKKRFKVTGTGKVMHAQRGKRHGMIKRTKKQ) form a disordered region.

It belongs to the bacterial ribosomal protein bL35 family.

The sequence is that of Large ribosomal subunit protein bL35 from Bradyrhizobium sp. (strain ORS 278).